We begin with the raw amino-acid sequence, 228 residues long: Interferon-induced transmembrane protein 10 (228 aa).

Residues 1–154 (MREGKRGPPC…PDTTEVNDYY (154 aa)) are Extracellular-facing. The tract at residues 29–49 (AQGPGQCPAPLGDPASTTDGA) is disordered. The chain crosses the membrane as a helical span at residues 155-175 (LWSIFNFVYLNFCCLGFIALA). 2 S-palmitoyl cysteine lipidation sites follow: Cys-167 and Cys-168. Residues 176–200 (YSLKVRDKKLLNDLNGAVEDAKTAR) are Cytoplasmic-facing. Residues 201 to 221 (LFNITSSALAASCIILVFIFL) traverse the membrane as a helical segment. Residues 222–228 (RYPLTDY) lie on the Extracellular side of the membrane.

The protein belongs to the CD225/Dispanin family.

Its subcellular location is the cell membrane. The polypeptide is Interferon-induced transmembrane protein 10 (IFITM10) (Homo sapiens (Human)).